The sequence spans 81 residues: Photosystem I iron-sulfur center (81 aa).

2 consecutive 4Fe-4S ferredoxin-type domains span residues 2-31 and 37-68; these read SHAV…MVPW and GQIA…IRVY. Residues Cys11, Cys14, Cys17, Cys21, Cys48, Cys51, Cys54, and Cys58 each contribute to the [4Fe-4S] cluster site.

As to quaternary structure, the cyanobacterial PSI reaction center is composed of one copy each of PsaA,B,C,D,E,F,I,J,K,L,M and X, and forms trimeric complexes. [4Fe-4S] cluster is required as a cofactor.

It localises to the cellular thylakoid membrane. It carries out the reaction reduced [plastocyanin] + hnu + oxidized [2Fe-2S]-[ferredoxin] = oxidized [plastocyanin] + reduced [2Fe-2S]-[ferredoxin]. Its function is as follows. Apoprotein for the two 4Fe-4S centers FA and FB of photosystem I (PSI); essential for photochemical activity. FB is the terminal electron acceptor of PSI, donating electrons to ferredoxin. The C-terminus interacts with PsaA/B/D and helps assemble the protein into the PSI complex. Required for binding of PsaD and PsaE to PSI. PSI is a plastocyanin/cytochrome c6-ferredoxin oxidoreductase, converting photonic excitation into a charge separation, which transfers an electron from the donor P700 chlorophyll pair to the spectroscopically characterized acceptors A0, A1, FX, FA and FB in turn. The polypeptide is Photosystem I iron-sulfur center (Synechococcus sp. (strain WH8103)).